Consider the following 1187-residue polypeptide: Intraflagellar transport protein 122 homolog (1187 aa).

WD repeat units lie at residues 16–54, 57–97, 99–135, 137–175, 180–223, 225–264, 266–306, and 459–498; these read KVEQCIYDLAFRPDGSQLIVAAGNRVLVYDTADGTLIQP, GHKD…LKYT, NDSIQCVSYNPVTHQLASCSSGDFGLWSPEQKSVSKH, VSSKITCCGWTNDGQYLALGMMNGVVSIRNKNGEEKVKI, GSSS…IGKD, SLTFDPCCVSFFSKGEYMVLCGSDRQAALYTRDGVRLGSI, EQNA…HGLY, and KQNTSVRCLDMSSNRSRLAVVDEHNTCLVYDIHTRELLFQ. The segment at 1070–1094 is disordered; that stretch reads KSWQEMSSGESQCLKLEDGPDDPED.

In terms of assembly, component of the IFT complex A (IFT-A) complex.

The protein localises to the cell projection. The protein resides in the cilium. Its subcellular location is the cytoplasm. It is found in the cytoskeleton. It localises to the cilium basal body. Functionally, required for cilia formation during embryonal development. Acts as a negative regulator of Shh signaling. The protein is Intraflagellar transport protein 122 homolog (ift122) of Danio rerio (Zebrafish).